Reading from the N-terminus, the 385-residue chain is MLKTQKDKNLENFFSSNNKTKKKKNIIVGLSGGVDSSLSAALLVERGWNVEGLTLWLMKGQGSCCSEGLVDAAGLCEDLGINHKIIDSREIFEREVIKKTTESYEKGFTPLPCSMCNKNVKFEEMLNYAISKKDFTHIATGHYARINKSSYATTLDCKNLVFKEFLLLRGADENKDQSYFLYSLSQEVLSRLEFPLGEMKKEDTRREALRLGLRTAQKPESQDLCLVEHYGSMQIFIDKHIEPKEGEIVHVNGKVLGKHNGIQHFTVGQRKGLGIAWPEPLYVKSLDRLKNIVYVADKSDLFNKEAIISKVNWVSIEEPEQEIEVQAQIRYRSNPVKGTLIPLKNLDNTTTTFKLIFEESQSSVTPGQAAVFYKGEILLGGGLIS.

Residues glycine 29–serine 36 and leucine 55 each bind ATP. The active-site Nucleophile is cysteine 116. The cysteines at positions 116 and 225 are disulfide-linked. Glycine 141 is a binding site for ATP. The tract at residues lysine 175–glutamine 177 is interaction with tRNA. Residue cysteine 225 is the Cysteine persulfide intermediate of the active site. Residues arginine 330–tyrosine 331 are interaction with tRNA.

It belongs to the MnmA/TRMU family.

It is found in the cytoplasm. The catalysed reaction is S-sulfanyl-L-cysteinyl-[protein] + uridine(34) in tRNA + AH2 + ATP = 2-thiouridine(34) in tRNA + L-cysteinyl-[protein] + A + AMP + diphosphate + H(+). Functionally, catalyzes the 2-thiolation of uridine at the wobble position (U34) of tRNA, leading to the formation of s(2)U34. The polypeptide is tRNA-specific 2-thiouridylase MnmA (Prochlorococcus marinus (strain AS9601)).